The primary structure comprises 822 residues: Anaphase-promoting complex subunit 2 (822 aa).

Residues Ser218, Ser314, Ser470, Ser534, and Ser697 each carry the phosphoserine modification. The segment at 450–495 (GDLAVELSKTDPASLETGQDSEDDSGEPEDWVPDPVDADPGKSSSK) is disordered. Residues 468 to 481 (QDSEDDSGEPEDWV) show a composition bias toward acidic residues. Residues 502–700 (ISLLVSIYGS…LLRRRMSVWL (199 aa)) are cullin homology. Tyr810 carries the post-translational modification Phosphotyrosine.

This sequence belongs to the cullin family. The mammalian APC/C is composed at least of 14 distinct subunits ANAPC1, ANAPC2, CDC27/APC3, ANAPC4, ANAPC5, CDC16/APC6, ANAPC7, CDC23/APC8, ANAPC10, ANAPC11, CDC26/APC12, ANAPC13, ANAPC15 and ANAPC16 that assemble into a complex of at least 19 chains with a combined molecular mass of around 1.2 MDa; APC/C interacts with FZR1 and FBXO5. In the context of the APC/C complex, directly interacts with UBE2C and UBE2S. Interacts (via cullin domain) with ANAPC11 and with UBCH10. Interacts with NEUROD2. Interacts with FBXO43; the interaction is direct.

It participates in protein modification; protein ubiquitination. Functionally, together with the RING-H2 protein ANAPC11, constitutes the catalytic component of the anaphase promoting complex/cyclosome (APC/C), a cell cycle-regulated E3 ubiquitin ligase that controls progression through mitosis and the G1 phase of the cell cycle. The APC/C complex acts by mediating ubiquitination and subsequent degradation of target proteins: it mainly mediates the formation of 'Lys-11'-linked polyubiquitin chains and, to a lower extent, the formation of 'Lys-48'- and 'Lys-63'-linked polyubiquitin chains. The APC/C complex catalyzes assembly of branched 'Lys-11'-/'Lys-48'-linked branched ubiquitin chains on target proteins. The CDC20-APC/C complex positively regulates the formation of synaptic vesicle clustering at active zone to the presynaptic membrane in postmitotic neurons. CDC20-APC/C-induced degradation of NEUROD2 drives presynaptic differentiation. The chain is Anaphase-promoting complex subunit 2 (ANAPC2) from Homo sapiens (Human).